Reading from the N-terminus, the 251-residue chain is Imidazole glycerol phosphate synthase subunit HisF (251 aa).

Residues D11 and D130 contribute to the active site.

The protein belongs to the HisA/HisF family. In terms of assembly, heterodimer of HisH and HisF.

The protein localises to the cytoplasm. It catalyses the reaction 5-[(5-phospho-1-deoxy-D-ribulos-1-ylimino)methylamino]-1-(5-phospho-beta-D-ribosyl)imidazole-4-carboxamide + L-glutamine = D-erythro-1-(imidazol-4-yl)glycerol 3-phosphate + 5-amino-1-(5-phospho-beta-D-ribosyl)imidazole-4-carboxamide + L-glutamate + H(+). Its pathway is amino-acid biosynthesis; L-histidine biosynthesis; L-histidine from 5-phospho-alpha-D-ribose 1-diphosphate: step 5/9. Functionally, IGPS catalyzes the conversion of PRFAR and glutamine to IGP, AICAR and glutamate. The HisF subunit catalyzes the cyclization activity that produces IGP and AICAR from PRFAR using the ammonia provided by the HisH subunit. The protein is Imidazole glycerol phosphate synthase subunit HisF of Cytophaga hutchinsonii (strain ATCC 33406 / DSM 1761 / CIP 103989 / NBRC 15051 / NCIMB 9469 / D465).